We begin with the raw amino-acid sequence, 236 residues long: MAETKLQLFVKASEDGESVGHCPSCQRLFMVLLLKGVPFTLTTVDTRRSPDVLKDFAPGSQLPILLYDSDAKTDTLQIEDFLEETLGPPDFPSLAPRYRESNTAGNDVFHKFSAFIKNPVPAQDEALYQQLLRALARLDSYLRAPLEHELAGEPQLRESRRRFLDGDRLTLADCSLLPKLHIVDTVCAHFRQAPIPAELRGVRRYLDSAMQEKEFKYTCPHSAEILAAYRPAVHPR.

The interval 1–88 is required for insertion into the membrane; that stretch reads MAETKLQLFV…EDFLEETLGP (88 aa). Residues 12 to 90 enclose the GST N-terminal domain; that stretch reads ASEDGESVGH…FLEETLGPPD (79 aa). Residues 22–25 carry the G-site motif; sequence CPSC. A disulfide bridge links Cys22 with Cys25. A helical transmembrane segment spans residues 24-44; sequence SCQRLFMVLLLKGVPFTLTTV. 2 positions are modified to phosphoserine: Ser49 and Ser159. Positions 68-235 constitute a GST C-terminal domain; that stretch reads DSDAKTDTLQ…LAAYRPAVHP (168 aa).

It belongs to the chloride channel CLIC family. In terms of assembly, associated with the C-terminal of MAPK15. In terms of tissue distribution, detected in placenta (at protein level). Widely expressed. High expression is found in placenta followed by lung and heart. Low expression in skeletal muscle, kidney and pancreas.

Its subcellular location is the nucleus. It is found in the membrane. The protein localises to the cell membrane. The protein resides in the cytoplasm. It localises to the secreted. Its subcellular location is the extracellular space. It is found in the extracellular matrix. It carries out the reaction chloride(in) = chloride(out). With respect to regulation, inhibited by rapamycin, amphotericin B and IAA-94. Its function is as follows. In the soluble state, catalyzes glutaredoxin-like thiol disulfide exchange reactions with reduced glutathione as electron donor. Reduced in a glutathione-dependent way and secreted into the extracellular matrix where it activates TGM2 and promotes blood vessel growth during tissue remodeling as occurs in tumorigenesis. Can reduce specific cysteines in TGM2 and regulate cofactor binding. Can insert into membranes and form outwardly rectifying chloride ion channels. May participate in cellular growth control. The chain is Chloride intracellular channel protein 3 from Homo sapiens (Human).